The following is a 290-amino-acid chain: 4-hydroxybenzoate octaprenyltransferase (290 aa).

8 consecutive transmembrane segments (helical) span residues 23 to 43 (IGAL…TPGV), 46 to 66 (LWIL…GCVV), 99 to 119 (LFVV…TMTI), 141 to 161 (LPQV…FAAV), 163 to 183 (ESVP…AVAY), 213 to 233 (LIIG…GELN), 234 to 254 (GLGW…VYQQ), and 268 to 288 (AFMN…MSYW).

Belongs to the UbiA prenyltransferase family. Mg(2+) is required as a cofactor.

The protein localises to the cell inner membrane. It carries out the reaction all-trans-octaprenyl diphosphate + 4-hydroxybenzoate = 4-hydroxy-3-(all-trans-octaprenyl)benzoate + diphosphate. The protein operates within cofactor biosynthesis; ubiquinone biosynthesis. Functionally, catalyzes the prenylation of para-hydroxybenzoate (PHB) with an all-trans polyprenyl group. Mediates the second step in the final reaction sequence of ubiquinone-8 (UQ-8) biosynthesis, which is the condensation of the polyisoprenoid side chain with PHB, generating the first membrane-bound Q intermediate 3-octaprenyl-4-hydroxybenzoate. This chain is 4-hydroxybenzoate octaprenyltransferase, found in Escherichia coli O6:K15:H31 (strain 536 / UPEC).